A 90-amino-acid chain; its full sequence is Auxin-responsive protein SAUR19 (90 aa).

This sequence belongs to the ARG7 family. As to quaternary structure, interacts with and inhibits PP2C-D subfamily of type 2C phosphatases such as PP2C67/PP2C-D1, PP2C64/PP2C-D5 and PP2C46/PP2C-D6.

Its subcellular location is the cell membrane. Provide a mechanistic link between auxin and plasma membrane H(+)-ATPases (PM H(+)-ATPases, e.g. AHA1 and AHA2), and triggers PM H(+)-ATPases activity by promoting phosphorylation of their C-terminal autoinhibitory domain as a result of PP2C-D subfamily of type 2C phosphatases inhibition, thus leading to the acidification of the apoplast and the facilitation of solutes and water uptake to drive cell expansion. Prevents the apical hook maintenance of etiolated seedlings. Functions as positive effectors of cell expansion through modulation of auxin transport. This chain is Auxin-responsive protein SAUR19, found in Arabidopsis thaliana (Mouse-ear cress).